Consider the following 197-residue polypeptide: Prefoldin subunit 3 (197 aa).

The interval 1-26 is disordered; the sequence is MASLALRGSSENPAPTKDTTTNPRGI. The span at 9 to 23 shows a compositional bias: polar residues; sequence SSENPAPTKDTTTNP.

The protein belongs to the prefoldin subunit alpha family. In terms of assembly, heterohexamer of two PFD-alpha type and four PFD-beta type subunits.

In terms of biological role, prefoldin subunit; part of the gene cluster that mediates the biosynthesis of elsinochromes, pigments consisting of at least four interconvertible tautomers (A, B, C and D) that have a core phenolic quinone to which various side chains are attached and which play an important role in fungal pathogenesis. The non-reducing polyketide synthase PKS1 was proposed to iteratively catalyze decarboxylation between acetyl-CoA and malonyl-CoA subunits for polyketide chain elongation. The released polyketide undergoes cyclization to form an aromatic ring, and proceeds via serial modification steps to produce the heptaketide back- bone of elsinochrome. As elsinochrome has a symmetrical structure, two identical heptaketides are fused to form a core 1,2-dihydrobenzo-perylene ring structure, which can then be successively modified to produce the various derivatives of elsinochrome. Some of these reactions may be cooperatively carried out, at least in part, by the products of RDT1, OXR1 and PKS1. PRF1, embedded within the elsinochrome cluster possibly functions to stabilize some of the biosynthetic enzymes required for elsinochrome production. As prefoldin is a hexamer containing 2 a and 4 b subunits, additional prefoldin subunits, whose coding genes may not immediately link to the elsinochrome biosynthetic gene cluster, are required to fulfill the chaperone function. In addition, no methyltransferase-coding gene exists within the biosynthetic gene cluster, even though elsinochrome has four methyl groups at positions C3, C7, C8 and C12. Apparently, the identified gene cluster does not contain the entire entourage of genes responsible for elsinochrome biosynthesis. Once elsinochrome is synthesized, it must be exported outside the fungal cells, which is probably accomplished by the ECT1 transporter, to avoid toxicity. The chain is Prefoldin subunit 3 from Elsinoe fawcettii (Citrus scab fungus).